Here is a 20-residue protein sequence, read N- to C-terminus: Cathepsin L1 (20 aa).

Residues Ala1 to Glu10 are compositionally biased toward basic and acidic residues. A disordered region spans residues Ala1 to Gln20.

Belongs to the peptidase C1 family. As to quaternary structure, dimer of a heavy and a light chain linked by disulfide bonds.

It is found in the lysosome. The catalysed reaction is Specificity close to that of papain. As compared to cathepsin B, cathepsin L exhibits higher activity toward protein substrates, but has little activity on Z-Arg-Arg-NHMec, and no peptidyl-dipeptidase activity.. Thiol protease that assists the parasite in burrowing through the gut wall and liver of its mammalian host. In Fasciola hepatica (Liver fluke), this protein is Cathepsin L1.